Reading from the N-terminus, the 225-residue chain is Uracil-DNA glycosylase (225 aa).

Residue Asp65 is the Proton acceptor of the active site.

It belongs to the uracil-DNA glycosylase (UDG) superfamily. UNG family.

The protein resides in the cytoplasm. It carries out the reaction Hydrolyzes single-stranded DNA or mismatched double-stranded DNA and polynucleotides, releasing free uracil.. Its function is as follows. Excises uracil residues from the DNA which can arise as a result of misincorporation of dUMP residues by DNA polymerase or due to deamination of cytosine. The sequence is that of Uracil-DNA glycosylase from Clostridium botulinum (strain Alaska E43 / Type E3).